Reading from the N-terminus, the 239-residue chain is Protein Thf1 (239 aa).

Residues 183–219 adopt a coiled-coil conformation; sequence ERVKKDLELYRSNLDRLKQARAIVEEMVKAARRQQER. A compositionally biased stretch (basic and acidic residues) spans 211–221; that stretch reads KAARRQQERRQ. The segment at 211 to 239 is disordered; the sequence is KAARRQQERRQSTASLPETPAADRRESSG.

Belongs to the THF1 family.

In terms of biological role, may be involved in photosynthetic membrane biogenesis. The protein is Protein Thf1 of Synechococcus sp. (strain JA-3-3Ab) (Cyanobacteria bacterium Yellowstone A-Prime).